The following is a 609-amino-acid chain: Glutamine--fructose-6-phosphate aminotransferase [isomerizing] (609 aa).

Catalysis depends on C2, which acts as the Nucleophile; for GATase activity. The region spanning 2–217 is the Glutamine amidotransferase type-2 domain; that stretch reads CGIVGYIGRR…EGWLAELTPE (216 aa). 2 consecutive SIS domains span residues 286–425 and 458–599; these read SAAE…QNGR and AAEA…VDKP. The active-site For Fru-6P isomerization activity is K604.

In terms of assembly, homodimer.

Its subcellular location is the cytoplasm. It carries out the reaction D-fructose 6-phosphate + L-glutamine = D-glucosamine 6-phosphate + L-glutamate. In terms of biological role, catalyzes the first step in hexosamine metabolism, converting fructose-6P into glucosamine-6P using glutamine as a nitrogen source. The protein is Glutamine--fructose-6-phosphate aminotransferase [isomerizing] of Symbiobacterium thermophilum (strain DSM 24528 / JCM 14929 / IAM 14863 / T).